The primary structure comprises 117 residues: Replication initiation control protein YabA (117 aa).

4 residues coordinate Zn(2+): histidine 87, cysteine 89, cysteine 103, and cysteine 106.

This sequence belongs to the YabA family. Homotetramer. Interacts with both DnaA and DnaN, acting as a bridge between these two proteins. The cofactor is Zn(2+).

The protein localises to the cytoplasm. The protein resides in the nucleoid. Involved in control of chromosome replication initiation. Inhibits the cooperative binding of DnaA to the oriC region, thus negatively regulating initiation of chromosome replication. Inhibits the ability of DnaA-ATP to form a helix on DNA; does not disassemble preformed DnaA-DNA helices. Decreases the residence time of DnaA on the chromosome at its binding sites (oriC, replication forks and promoter-binding sites). Tethers DnaA to the replication machinery via the DNA polymerase beta sliding clamp subunit (dnaN). Associates with oriC and other DnaA targets on the chromosome in a DnaA-dependent manner. The protein is Replication initiation control protein YabA of Latilactobacillus sakei subsp. sakei (strain 23K) (Lactobacillus sakei subsp. sakei).